The sequence spans 359 residues: Aspartate carbamoyltransferase catalytic subunit (359 aa).

Residues R52 and T53 each contribute to the carbamoyl phosphate site. K81 provides a ligand contact to L-aspartate. Residues R102, H130, and Q133 each contribute to the carbamoyl phosphate site. L-aspartate contacts are provided by R163 and R224. Positions 264 and 265 each coordinate carbamoyl phosphate.

This sequence belongs to the aspartate/ornithine carbamoyltransferase superfamily. ATCase family. Heterododecamer (2C3:3R2) of six catalytic PyrB chains organized as two trimers (C3), and six regulatory PyrI chains organized as three dimers (R2).

It carries out the reaction carbamoyl phosphate + L-aspartate = N-carbamoyl-L-aspartate + phosphate + H(+). Its pathway is pyrimidine metabolism; UMP biosynthesis via de novo pathway; (S)-dihydroorotate from bicarbonate: step 2/3. Its function is as follows. Catalyzes the condensation of carbamoyl phosphate and aspartate to form carbamoyl aspartate and inorganic phosphate, the committed step in the de novo pyrimidine nucleotide biosynthesis pathway. The polypeptide is Aspartate carbamoyltransferase catalytic subunit (Brachyspira hyodysenteriae (strain ATCC 49526 / WA1)).